The primary structure comprises 270 residues: MIKSIILQAIMVLSTLTSVHGANSSGCGKQPTLVNGVHKINDREYILKVPDNYNANKPHHLIFGLHWRGGNMNSVVNGESVEPWYGLETRAQGSAILVAPNGRNAGWANTNGEDVALIDAIIKQVEDDLCIDQSSRFATGFSWGGGMSYALACARAKEFRAVSVLSGGVISGCEGGHDPIAYLGIHGISDPVLPFDGGVTLANKFAANNGCQQAYVGKPGLGSHSSVQTDFKGCSRPVSFIAYDGGHDAAPLGVGNPLAPDATWKFFMAA.

A signal peptide spans 1–21 (MIKSIILQAIMVLSTLTSVHG). Residue N23 is glycosylated (N-linked (GlcNAc...) asparagine).

It belongs to the faeC family.

The protein resides in the secreted. It catalyses the reaction feruloyl-polysaccharide + H2O = ferulate + polysaccharide.. In terms of biological role, involved in degradation of plant cell walls. Hydrolyzes the feruloyl-arabinose ester bond in arabinoxylans, and the feruloyl-galactose ester bond in pectin. Active against paranitrophenyl-acetate, methyl ferulate and wheat arabinoxylan. This Aspergillus flavus (strain ATCC 200026 / FGSC A1120 / IAM 13836 / NRRL 3357 / JCM 12722 / SRRC 167) protein is Probable feruloyl esterase C (faeC).